We begin with the raw amino-acid sequence, 514 residues long: HTH-type transcriptional regulatory protein TyrR (514 aa).

The 71-residue stretch at 2–72 (RLEVFCEDRL…GVTDVRTVPW (71 aa)) folds into the ACT domain. The PAS domain occupies 78 to 120 (EHLALSALLEALPEPVLSLDMKSKIEMANPASCQLFAHTQDRM). The Sigma-54 factor interaction domain maps to 206–428 (IIAVSAKMKH…VKNAIYRALT (223 aa)). ATP is bound by residues 234–241 (GNTGTGKD) and 290–299 (ANGGSVLLDE). The segment at residues 482-502 (STRKLAKRLGVSHTAIANKLR) is a DNA-binding region (H-T-H motif).

In terms of assembly, homodimer. In presence of tyrosine (or high concentrations of phenylalanine or tryptophan) and ATP, it self-associates to form an hexamer.

The protein resides in the cytoplasm. Functionally, dual transcriptional regulator of the TyrR regulon, which includes a number of genes coding for proteins involved in the biosynthesis or transport of the three aromatic amino acids, phenylalanine, tyrosine and tryptophan. These three aromatic amino acids act as effectors which bind to the TyrR protein to form an active regulatory protein. Acts by binding specifically to TyrR boxes in the promoter region of the target genes. The polypeptide is HTH-type transcriptional regulatory protein TyrR (Citrobacter braakii).